The primary structure comprises 417 residues: Phosphoribosylamine--glycine ligase (417 aa).

Residues 108–307 (KRIMDEAGVP…LSTLLFAAAT (200 aa)) form the ATP-grasp domain. 134–188 (LDEFGAPYVVKADGLAAGKGVIVTEDRAAALAHAARYLTHGSVLVEEFLDGEEVS) is a binding site for ATP. Residues Glu277 and Asn279 each contribute to the Mg(2+) site.

It belongs to the GARS family. Mg(2+) is required as a cofactor. It depends on Mn(2+) as a cofactor.

The catalysed reaction is 5-phospho-beta-D-ribosylamine + glycine + ATP = N(1)-(5-phospho-beta-D-ribosyl)glycinamide + ADP + phosphate + H(+). It participates in purine metabolism; IMP biosynthesis via de novo pathway; N(1)-(5-phospho-D-ribosyl)glycinamide from 5-phospho-alpha-D-ribose 1-diphosphate: step 2/2. The protein is Phosphoribosylamine--glycine ligase of Leifsonia xyli subsp. xyli (strain CTCB07).